Reading from the N-terminus, the 118-residue chain is Protein BEX4 (118 aa).

The segment at 14–50 is disordered; that stretch reads VEKDKKDKKGGKASKQSEEEPHHLEEVENKKPGGNVR. A compositionally biased stretch (basic and acidic residues) spans 28-44; it reads KQSEEEPHHLEEVENKK. The segment at 30–88 is interaction with SIRT2; it reads SEEEPHHLEEVENKKPGGNVRRKVRRLVPNFLWAIPNRHVDRNEGGEDVGRFVVQGTEV. The interaction with alpha-tubulin stretch occupies residues 30–118; it reads SEEEPHHLEE…DNHYDFCLIP (89 aa). Residue Cys-115 coordinates Zn(2+).

It belongs to the BEX family. As to quaternary structure, interacts with alpha-tubulin. Interacts with SIRT2. Ubiquitinated and degraded by the proteasome. As to expression, expressed in both Sertoli and germ cells as well as interstitial area of the testis (at protein level).

It is found in the cytoplasm. It localises to the cytoskeleton. Its subcellular location is the spindle pole. The protein resides in the nucleus. Its function is as follows. May play a role in microtubule deacetylation by negatively regulating the SIRT2 deacetylase activity toward alpha-tubulin and thereby participate in the control of cell cycle progression and genomic stability. In absence of reductive stress, acts as a pseudosubstrate for the CRL2(FEM1B) complex: associates with FEM1B via zinc, thereby preventing association between FEM1B and its substrates. This Mus musculus (Mouse) protein is Protein BEX4.